The primary structure comprises 582 residues: ATP-dependent lipid A-core flippase (582 aa).

Transmembrane regions (helical) follow at residues 15 to 35 (LWPI…ALVI), 68 to 88 (YVVV…SYCL), 140 to 160 (GALI…AVML), 161 to 181 (YTSW…AVLI), and 254 to 274 (VQII…VPTI). Residues 27 to 310 (VVSGIALVIN…LTNVNAQFQK (284 aa)) enclose the ABC transmembrane type-1 domain. One can recognise an ABC transporter domain in the interval 342–578 (LSFKNVTFTY…NGAYKQLHHI (237 aa)). 376–383 (GRSGSGKS) is a binding site for ATP.

The protein belongs to the ABC transporter superfamily. Lipid exporter (TC 3.A.1.106) family. Homodimer.

The protein localises to the cell inner membrane. The enzyme catalyses ATP + H2O + lipid A-core oligosaccharideSide 1 = ADP + phosphate + lipid A-core oligosaccharideSide 2.. Involved in lipopolysaccharide (LPS) biosynthesis. Translocates lipid A-core from the inner to the outer leaflet of the inner membrane. Transmembrane domains (TMD) form a pore in the inner membrane and the ATP-binding domain (NBD) is responsible for energy generation. This is ATP-dependent lipid A-core flippase from Pasteurella multocida (strain Pm70).